The primary structure comprises 504 residues: uncharacterized protein (504 aa).

The segment at 431–483 (GEAEKYRKLQDGDEDEEGTGKPEPKKARRKGFGGKFAPKHEEKVTRAVGVNSE) is disordered.

This sequence belongs to the CBF/MAK21 family.

This is an uncharacterized protein from Caenorhabditis elegans.